The primary structure comprises 161 residues: Ubiquitin-conjugating enzyme E2Q-like protein 1 (161 aa).

Positions 1 to 154 constitute a UBC core domain; the sequence is MKELQDIARL…VKTHEKYGWV (154 aa). The active-site Glycyl thioester intermediate is the C88.

Belongs to the ubiquitin-conjugating enzyme family. As to quaternary structure, interacts with FBXW7.

It localises to the nucleus. The enzyme catalyses S-ubiquitinyl-[E1 ubiquitin-activating enzyme]-L-cysteine + [E2 ubiquitin-conjugating enzyme]-L-cysteine = [E1 ubiquitin-activating enzyme]-L-cysteine + S-ubiquitinyl-[E2 ubiquitin-conjugating enzyme]-L-cysteine.. It functions in the pathway protein modification; protein ubiquitination. Its function is as follows. Probable E2 ubiquitin-protein ligase that catalyzes the covalent attachment of ubiquitin to target proteins. May facilitate the monoubiquitination and degradation of MTOR and CCNE1 through interaction with FBXW7. The sequence is that of Ubiquitin-conjugating enzyme E2Q-like protein 1 (UBE2QL1) from Homo sapiens (Human).